The chain runs to 404 residues: uncharacterized protein (404 aa).

Positions 262-278 (VSTGDTSPCGTEDSSPA) are enriched in polar residues. Disordered stretches follow at residues 262–307 (VSTG…SPSL) and 319–340 (MKKS…SGAD). Ser268, Ser276, and Ser279 each carry phosphoserine. Phosphothreonine occurs at positions 290 and 293. Ser304, Ser306, Ser324, Ser358, and Ser362 each carry phosphoserine. Positions 319–336 (MKKSHSANDSEEFFREDD) are enriched in basic and acidic residues.

This is an uncharacterized protein from Mus musculus (Mouse).